A 299-amino-acid chain; its full sequence is Bifunctional protein FolD (299 aa).

NADP(+) contacts are provided by residues 169 to 171 (GRS), S194, and I235.

The protein belongs to the tetrahydrofolate dehydrogenase/cyclohydrolase family. Homodimer.

The enzyme catalyses (6R)-5,10-methylene-5,6,7,8-tetrahydrofolate + NADP(+) = (6R)-5,10-methenyltetrahydrofolate + NADPH. The catalysed reaction is (6R)-5,10-methenyltetrahydrofolate + H2O = (6R)-10-formyltetrahydrofolate + H(+). The protein operates within one-carbon metabolism; tetrahydrofolate interconversion. Catalyzes the oxidation of 5,10-methylenetetrahydrofolate to 5,10-methenyltetrahydrofolate and then the hydrolysis of 5,10-methenyltetrahydrofolate to 10-formyltetrahydrofolate. This chain is Bifunctional protein FolD, found in Trichormus variabilis (strain ATCC 29413 / PCC 7937) (Anabaena variabilis).